Reading from the N-terminus, the 317-residue chain is Beta-ketoacyl-[acyl-carrier-protein] synthase III (317 aa).

Active-site residues include cysteine 112 and histidine 244. An ACP-binding region spans residues 245–249; sequence QANLR. Asparagine 274 is an active-site residue.

Belongs to the thiolase-like superfamily. FabH family. In terms of assembly, homodimer.

Its subcellular location is the cytoplasm. It catalyses the reaction malonyl-[ACP] + acetyl-CoA + H(+) = 3-oxobutanoyl-[ACP] + CO2 + CoA. Its pathway is lipid metabolism; fatty acid biosynthesis. Its function is as follows. Catalyzes the condensation reaction of fatty acid synthesis by the addition to an acyl acceptor of two carbons from malonyl-ACP. Catalyzes the first condensation reaction which initiates fatty acid synthesis and may therefore play a role in governing the total rate of fatty acid production. Possesses both acetoacetyl-ACP synthase and acetyl transacylase activities. Its substrate specificity determines the biosynthesis of branched-chain and/or straight-chain of fatty acids. In Pasteurella multocida (strain Pm70), this protein is Beta-ketoacyl-[acyl-carrier-protein] synthase III.